The primary structure comprises 345 residues: Holliday junction branch migration complex subunit RuvB (345 aa).

Residues 3-187 (LDILQNRNNL…FGFTARLDFY (185 aa)) are large ATPase domain (RuvB-L). ATP contacts are provided by residues Leu26, Arg27, Gly68, Lys71, Thr72, Thr73, 134 to 136 (EDF), Arg177, Tyr187, and Arg224. Mg(2+) is bound at residue Thr72. A small ATPAse domain (RuvB-S) region spans residues 188–259 (SPEELLQVLI…IALKAMDVYE (72 aa)). Residues 262–345 (SLGLDRLDRA…EDLSGFELYL (84 aa)) form a head domain (RuvB-H) region. 2 residues coordinate DNA: Arg317 and Arg322.

This sequence belongs to the RuvB family. In terms of assembly, homohexamer. Forms an RuvA(8)-RuvB(12)-Holliday junction (HJ) complex. HJ DNA is sandwiched between 2 RuvA tetramers; dsDNA enters through RuvA and exits via RuvB. An RuvB hexamer assembles on each DNA strand where it exits the tetramer. Each RuvB hexamer is contacted by two RuvA subunits (via domain III) on 2 adjacent RuvB subunits; this complex drives branch migration. In the full resolvosome a probable DNA-RuvA(4)-RuvB(12)-RuvC(2) complex forms which resolves the HJ.

It is found in the cytoplasm. It carries out the reaction ATP + H2O = ADP + phosphate + H(+). In terms of biological role, the RuvA-RuvB-RuvC complex processes Holliday junction (HJ) DNA during genetic recombination and DNA repair, while the RuvA-RuvB complex plays an important role in the rescue of blocked DNA replication forks via replication fork reversal (RFR). RuvA specifically binds to HJ cruciform DNA, conferring on it an open structure. The RuvB hexamer acts as an ATP-dependent pump, pulling dsDNA into and through the RuvAB complex. RuvB forms 2 homohexamers on either side of HJ DNA bound by 1 or 2 RuvA tetramers; 4 subunits per hexamer contact DNA at a time. Coordinated motions by a converter formed by DNA-disengaged RuvB subunits stimulates ATP hydrolysis and nucleotide exchange. Immobilization of the converter enables RuvB to convert the ATP-contained energy into a lever motion, pulling 2 nucleotides of DNA out of the RuvA tetramer per ATP hydrolyzed, thus driving DNA branch migration. The RuvB motors rotate together with the DNA substrate, which together with the progressing nucleotide cycle form the mechanistic basis for DNA recombination by continuous HJ branch migration. Branch migration allows RuvC to scan DNA until it finds its consensus sequence, where it cleaves and resolves cruciform DNA. The protein is Holliday junction branch migration complex subunit RuvB of Tropheryma whipplei (strain TW08/27) (Whipple's bacillus).